Here is a 276-residue protein sequence, read N- to C-terminus: Golgi apparatus membrane protein TVP23 homolog C (276 aa).

M1 is modified (N-acetylmethionine). The tract at residues 1–21 is disordered; it reads MLQQDSNDDTEDVSLFDAEEE. 2 helical membrane passes run 52 to 72 and 126 to 146; these read LLCE…ILLL and IFWL…FSAL. Positions 254-276 are disordered; sequence GESPNSRGTGEPGPKFHLASGMH.

Belongs to the TVP23 family.

The protein resides in the membrane. In Homo sapiens (Human), this protein is Golgi apparatus membrane protein TVP23 homolog C (TVP23C).